Here is a 460-residue protein sequence, read N- to C-terminus: Proline--tRNA ligase (460 aa).

The protein belongs to the class-II aminoacyl-tRNA synthetase family. ProS type 3 subfamily. As to quaternary structure, homodimer.

Its subcellular location is the cytoplasm. It carries out the reaction tRNA(Pro) + L-proline + ATP = L-prolyl-tRNA(Pro) + AMP + diphosphate. Functionally, catalyzes the attachment of proline to tRNA(Pro) in a two-step reaction: proline is first activated by ATP to form Pro-AMP and then transferred to the acceptor end of tRNA(Pro). This is Proline--tRNA ligase from Methanococcus maripaludis (strain DSM 14266 / JCM 13030 / NBRC 101832 / S2 / LL).